We begin with the raw amino-acid sequence, 763 residues long: Amine oxidase [copper-containing] 3 (763 aa).

Over 2-6 (TQKTT) the chain is Cytoplasmic. Residues 7–27 (LVLLALAVITIFALVCVLLAG) traverse the membrane as a helical; Signal-anchor for type II membrane protein segment. Topologically, residues 28 to 763 (RSGDGGRLSQ…AFSHGGFTYK (736 aa)) are extracellular. N137 carries N-linked (GlcNAc...) asparagine glycosylation. C198 and C199 are joined by a disulfide. N232 and N294 each carry an N-linked (GlcNAc...) asparagine glycan. The Proton acceptor role is filled by D386. Residues C404 and C430 are joined by a disulfide bond. The Schiff-base intermediate with substrate; via topaquinone role is filled by Y471. Y471 is subject to 2',4',5'-topaquinone. Cu(2+) is bound by residues H520 and H522. D529, L530, D531, and E572 together coordinate Ca(2+). N-linked (GlcNAc...) asparagine glycans are attached at residues N581 and N592. The Ca(2+) site is built by E641 and F663. N-linked (GlcNAc...) asparagine glycosylation is present at N666. The Ca(2+) site is built by E667, D673, and L674. H684 is a Cu(2+) binding site. The cysteines at positions 734 and 741 are disulfide-linked.

This sequence belongs to the copper/topaquinone oxidase family. As to quaternary structure, homodimer; disulfide-linked. Probably forms heterodimers with AOC2. The cofactor is Cu(2+). Ca(2+) is required as a cofactor. It depends on L-topaquinone as a cofactor. In terms of processing, topaquinone (TPQ) is generated by copper-dependent autoxidation of a specific tyrosyl residue. N- and O-glycosylated. As to expression, highly expressed in adipocytes, aorta and lung. Expressed at lower levels in heart, kidney, large intestine, liver, small intestine and stomach.

Its subcellular location is the cell membrane. It carries out the reaction methylamine + O2 + H2O = formaldehyde + H2O2 + NH4(+). The enzyme catalyses benzylamine + O2 + H2O = benzaldehyde + H2O2 + NH4(+). The catalysed reaction is 2-phenylethylamine + O2 + H2O = 2-phenylacetaldehyde + H2O2 + NH4(+). Its function is as follows. Catalyzes the oxidative deamination of primary amines to the corresponding aldehydes with the concomitant production of hydrogen peroxide and ammonia. Has a preference for the primary monoamines methylamine and benzylamine. Could also act on 2-phenylethylamine but much less efficiently. At endothelial cells surface can also function as a cell adhesion protein that participates in lymphocyte extravasation and recirculation by mediating the binding of lymphocytes to peripheral lymph node vascular endothelial cells in an L-selectin-independent fashion. This is Amine oxidase [copper-containing] 3 from Rattus norvegicus (Rat).